A 751-amino-acid chain; its full sequence is Photosystem I P700 chlorophyll a apoprotein A1 (751 aa).

The next 8 helical transmembrane spans lie at 71-94 (VFSAHFGQLSIIFLWLSGMYFHGA), 157-180 (LYCTAIGALIFASLMLFAGWFHYH), 196-220 (LNHHLAGLLGLGSLSWAGHQIHVSL), 292-310 (IAHHHLAIAILFLIAGHMY), 347-370 (WHAQLSLNLAMLGSTTIVVAHHMY), 386-412 (LSLFTHHMWIGGFLIVGAAAHAAIFMV), 434-456 (AIISHLNWVCIFLGFHSFGLYIH), and 532-550 (FLVHHIHAFTIHVTVLILL). Residues C574 and C583 each coordinate [4Fe-4S] cluster. 2 helical membrane-spanning segments follow: residues 590–611 (HVFLGLFWMYNSISVVIFHFSW) and 665–687 (LSAYGLFFLGAHFVWAFSLMFLF). H676 lines the chlorophyll a' pocket. Chlorophyll a contacts are provided by M684 and Y692. W693 is a phylloquinone binding site. The chain crosses the membrane as a helical span at residues 725-745 (AVGVTHYLLGGIATTWAFFLA).

It belongs to the PsaA/PsaB family. As to quaternary structure, the PsaA/B heterodimer binds the P700 chlorophyll special pair and subsequent electron acceptors. PSI consists of a core antenna complex that captures photons, and an electron transfer chain that converts photonic excitation into a charge separation. The eukaryotic PSI reaction center is composed of at least 11 subunits. Requires P700 is a chlorophyll a/chlorophyll a' dimer, A0 is one or more chlorophyll a, A1 is one or both phylloquinones and FX is a shared 4Fe-4S iron-sulfur center. as cofactor.

The protein resides in the plastid. It localises to the chloroplast thylakoid membrane. The catalysed reaction is reduced [plastocyanin] + hnu + oxidized [2Fe-2S]-[ferredoxin] = oxidized [plastocyanin] + reduced [2Fe-2S]-[ferredoxin]. Functionally, psaA and PsaB bind P700, the primary electron donor of photosystem I (PSI), as well as the electron acceptors A0, A1 and FX. PSI is a plastocyanin-ferredoxin oxidoreductase, converting photonic excitation into a charge separation, which transfers an electron from the donor P700 chlorophyll pair to the spectroscopically characterized acceptors A0, A1, FX, FA and FB in turn. Oxidized P700 is reduced on the lumenal side of the thylakoid membrane by plastocyanin. The protein is Photosystem I P700 chlorophyll a apoprotein A1 of Zea mays (Maize).